The following is a 78-amino-acid chain: RNA-binding protein KhpA (78 aa).

Residues 29-78 form the KH domain; it reads TIIYELTVAKGDIGKIIGKEGRTIKAIRTLLVSVASRDNVKVSLEIMEER.

It belongs to the KhpA RNA-binding protein family.

The protein resides in the cytoplasm. A probable RNA-binding protein. This chain is RNA-binding protein KhpA, found in Chlamydia muridarum (strain MoPn / Nigg).